Here is a 459-residue protein sequence, read N- to C-terminus: Bifunctional protein GlmU (459 aa).

Residues 1-229 are pyrophosphorylase; sequence MSNFAIILAA…FDESLGVNDR (229 aa). UDP-N-acetyl-alpha-D-glucosamine contacts are provided by residues 8–11, lysine 22, glutamine 72, 77–78, 101–102, glycine 139, glutamate 154, asparagine 169, and asparagine 227; these read LAAG, GT, and GD. Aspartate 102 is a Ca(2+) binding site. Aspartate 102 lines the Mg(2+) pocket. Asparagine 227 is a Ca(2+) binding site. A Mg(2+)-binding site is contributed by asparagine 227. The tract at residues 230 to 250 is linker; that stretch reads VALATAESVMRRRINHKHMVN. The tract at residues 251 to 459 is N-acetyltransferase; sequence GVSFVNPEAT…TRLPHHPKNQ (209 aa). The UDP-N-acetyl-alpha-D-glucosamine site is built by arginine 332 and lysine 350. Histidine 362 serves as the catalytic Proton acceptor. Residues tyrosine 365 and asparagine 376 each coordinate UDP-N-acetyl-alpha-D-glucosamine. Acetyl-CoA is bound by residues alanine 379, 385–386, serine 404, alanine 422, and arginine 439; that span reads NY.

This sequence in the N-terminal section; belongs to the N-acetylglucosamine-1-phosphate uridyltransferase family. It in the C-terminal section; belongs to the transferase hexapeptide repeat family. As to quaternary structure, homotrimer. Mg(2+) serves as cofactor. Ca(2+) is required as a cofactor.

It localises to the cytoplasm. It catalyses the reaction alpha-D-glucosamine 1-phosphate + acetyl-CoA = N-acetyl-alpha-D-glucosamine 1-phosphate + CoA + H(+). The enzyme catalyses N-acetyl-alpha-D-glucosamine 1-phosphate + UTP + H(+) = UDP-N-acetyl-alpha-D-glucosamine + diphosphate. The protein operates within nucleotide-sugar biosynthesis; UDP-N-acetyl-alpha-D-glucosamine biosynthesis; N-acetyl-alpha-D-glucosamine 1-phosphate from alpha-D-glucosamine 6-phosphate (route II): step 2/2. It functions in the pathway nucleotide-sugar biosynthesis; UDP-N-acetyl-alpha-D-glucosamine biosynthesis; UDP-N-acetyl-alpha-D-glucosamine from N-acetyl-alpha-D-glucosamine 1-phosphate: step 1/1. It participates in bacterial outer membrane biogenesis; LPS lipid A biosynthesis. In terms of biological role, catalyzes the last two sequential reactions in the de novo biosynthetic pathway for UDP-N-acetylglucosamine (UDP-GlcNAc). The C-terminal domain catalyzes the transfer of acetyl group from acetyl coenzyme A to glucosamine-1-phosphate (GlcN-1-P) to produce N-acetylglucosamine-1-phosphate (GlcNAc-1-P), which is converted into UDP-GlcNAc by the transfer of uridine 5-monophosphate (from uridine 5-triphosphate), a reaction catalyzed by the N-terminal domain. This is Bifunctional protein GlmU from Streptococcus pneumoniae serotype 4 (strain ATCC BAA-334 / TIGR4).